We begin with the raw amino-acid sequence, 233 residues long: MAENEAQKLINFIANAKKITPVKVTYKGTLATEVPDTVQQFGDESFGQLIGDWSEIELLIKNLPSEDVFIENDSRNSAVPLLDKKEINARIEPGAIIRDQVEIGDNAVIMLGAVINIGAEIGANTMIDMGAVLGGRAIVGENSHIGAGAVLAGVIEPASAQPVRIGNNVLVGANAVVIEGVQVGDGAVVAAGAIVTKDVPANTVVAGVPAKVIKEIDSKTQQKTALIDALRGL.

Belongs to the transferase hexapeptide repeat family. DapH subfamily.

It catalyses the reaction (S)-2,3,4,5-tetrahydrodipicolinate + acetyl-CoA + H2O = L-2-acetamido-6-oxoheptanedioate + CoA. It participates in amino-acid biosynthesis; L-lysine biosynthesis via DAP pathway; LL-2,6-diaminopimelate from (S)-tetrahydrodipicolinate (acetylase route): step 1/3. In terms of biological role, catalyzes the transfer of an acetyl group from acetyl-CoA to tetrahydrodipicolinate. In Leuconostoc mesenteroides subsp. mesenteroides (strain ATCC 8293 / DSM 20343 / BCRC 11652 / CCM 1803 / JCM 6124 / NCDO 523 / NBRC 100496 / NCIMB 8023 / NCTC 12954 / NRRL B-1118 / 37Y), this protein is 2,3,4,5-tetrahydropyridine-2,6-dicarboxylate N-acetyltransferase.